The primary structure comprises 432 residues: Anaerobic glycerol-3-phosphate dehydrogenase subunit B (432 aa).

It belongs to the anaerobic G-3-P dehydrogenase subunit B family. In terms of assembly, composed of a catalytic GlpA/B dimer and of membrane bound GlpC. It depends on FMN as a cofactor.

It catalyses the reaction a quinone + sn-glycerol 3-phosphate = dihydroxyacetone phosphate + a quinol. It functions in the pathway polyol metabolism; glycerol degradation via glycerol kinase pathway; glycerone phosphate from sn-glycerol 3-phosphate (anaerobic route): step 1/1. Its function is as follows. Conversion of glycerol 3-phosphate to dihydroxyacetone. Uses fumarate or nitrate as electron acceptor. This Haemophilus influenzae (strain PittEE) protein is Anaerobic glycerol-3-phosphate dehydrogenase subunit B.